Here is a 242-residue protein sequence, read N- to C-terminus: N-alpha-acetyltransferase 60 (242 aa).

Residues 1 to 192 (MTEVVPSSAL…GGHPPWTILD (192 aa)) lie on the Cytoplasmic side of the membrane. An N-acetyltransferase domain is found at 13–182 (VSLRLLCHDD…DGFTYVLYIN (170 aa)). Tyr38 is a binding site for substrate. Lys79 carries the N6-acetyllysine; by autocatalysis modification. The active site involves Tyr97. Residue Leu99 coordinates substrate. An acetyl-CoA-binding site is contributed by 101–103 (LGV). Residues Lys105, Lys109, and Lys121 each carry the N6-acetyllysine; by autocatalysis modification. Residue 109 to 114 (KHGIGS) coordinates acetyl-CoA. His138 is a catalytic residue. Acetyl-CoA is bound by residues Asn143 and 150–153 (YENR). The tract at residues 162-173 (PYYYSIRGVLKD) is required for homodimerization. A substrate-binding site is contributed by Tyr165. An intramembrane region (helical) is located at residues 193-236 (YIQHLGSALANLSPCSIPHRIYRQAHSLLCSFLPWSSISSKGGI). The Cytoplasmic portion of the chain corresponds to 237–242 (EYSRTM).

The protein belongs to the acetyltransferase family. NAA60 subfamily. As to quaternary structure, monomer and homodimer; monomer in presence of substrate and homodimer in its absence. Acetylated: autoacetylation is required for optimal acetyltransferase activity.

It localises to the golgi apparatus membrane. It carries out the reaction N-terminal L-methionyl-[transmembrane protein] + acetyl-CoA = N-terminal N(alpha)-acetyl-L-methionyl-[transmembrane protein] + CoA + H(+). The enzyme catalyses L-lysyl-[protein] + acetyl-CoA = N(6)-acetyl-L-lysyl-[protein] + CoA + H(+). In terms of biological role, N-alpha-acetyltransferase that specifically mediates the acetylation of N-terminal residues of the transmembrane proteins, with a strong preference for N-termini facing the cytosol. Displays N-terminal acetyltransferase activity towards a range of N-terminal sequences including those starting with Met-Lys, Met-Val, Met-Ala and Met-Met. Required for normal chromosomal segregation during anaphase. May also show histone acetyltransferase activity; such results are however unclear in vivo and would require additional experimental evidences. This chain is N-alpha-acetyltransferase 60 (Naa60), found in Rattus norvegicus (Rat).